A 1604-amino-acid polypeptide reads, in one-letter code: Calmodulin-regulated spectrin-associated protein 1 (1604 aa).

Phosphoserine is present on S216. In terms of domain architecture, Calponin-homology (CH) spans 235-350 (PVDFARVVRY…FIAELFWWFE (116 aa)). A phosphoserine mark is found at S390, S394, and S435. The tract at residues 394 to 413 (SPAAMSPADLPPSTQPLTEG) is disordered. Residues 444 to 491 (RQKQQKVSQAEEIPDQRHRSNSLTRADGQPRGAAIAWPDKKNRPVSQP) are disordered. T531 is subject to Phosphothreonine. S571, S574, S581, S593, S607, S647, S739, S745, S755, and S757 each carry phosphoserine. The disordered stretch occupies residues 642-671 (MAKRPSEGSQPLVRKKVTGSHGSRDLNRTF). Over residues 784–806 (EEESAKLQEDMKVKEHEDKDDAS) the composition is skewed to basic and acidic residues. Disordered stretches follow at residues 784–824 (EEES…SMSM) and 842–888 (LNSC…KDPA). Composition is skewed to low complexity over residues 813–824 (LSTTSQLSSMSM) and 847–858 (TKSSTSSSQKTT). Positions 874–886 (QKREQSPSRHSKD) are enriched in basic and acidic residues. The interval 888–909 (ASLLASELVQLHMQLEEKRRAI) is sufficient for interaction with SPTBN1. Coiled-coil stretches lie at residues 890–926 (LLASELVQLHMQLEEKRRAIEAQKKKMEALSARQRLK) and 1026–1058 (DVNECDLSIEKLNETISTLQQAILKISQQQEQL). The interval 920–939 (SARQRLKLGKAAFLHVVKKG) is sufficient for interaction with calmodulin. 3 disordered regions span residues 1085-1163 (FVEP…GELP), 1246-1271 (PDEDGEVVGHESSLELGGESDQKPGV), and 1298-1448 (RKAE…DRDW). Residue S1090 is modified to Phosphoserine. Residues 1113–1124 (RPAELKVPKDRQ) are compositionally biased toward basic and acidic residues. Residues 1125-1137 (QGCSRSKTPTPSV) are compositionally biased toward polar residues. Position 1154 is a phosphoserine (S1154). 2 stretches are compositionally biased toward basic and acidic residues: residues 1246-1258 (PDEDGEVVGHESS) and 1298-1348 (RKAE…EYLR). The stretch at 1286–1357 (AKKRAAFLLK…RRKQQQALEE (72 aa)) forms a coiled coil. Positions 1363 to 1374 (PKSKPKKPRPKS) are enriched in basic residues. Polar residues predominate over residues 1382–1394 (SDSGTKCSSTPDN). A compositionally biased stretch (low complexity) spans 1395–1412 (LSQTHSGSSLSLASAATT). S1400 and S1429 each carry phosphoserine. A CKK domain is found at 1465-1599 (GPKLFKEPSS…QPKRPTVPKK (135 aa)). Phosphotyrosine is present on Y1539.

Belongs to the CAMSAP1 family. As to quaternary structure, interacts with spectrin via SPTBN1; the interaction is direct. Interacts with calmodulin; calcium-dependent it prevents interaction with spectrin. In brain, specifically expressed in astrocytes (at protein level).

It is found in the cytoplasm. The protein localises to the cytoskeleton. Its function is as follows. Key microtubule-organizing protein that specifically binds the minus-end of non-centrosomal microtubules and regulates their dynamics and organization. Specifically recognizes growing microtubule minus-ends and stabilizes microtubules. Acts on free microtubule minus-ends that are not capped by microtubule-nucleating proteins or other factors and protects microtubule minus-ends from depolymerization. In contrast to CAMSAP2 and CAMSAP3, tracks along the growing tips of minus-end microtubules without significantly affecting the polymerization rate: binds at the very tip of the microtubules minus-end and acts as a minus-end tracking protein (-TIP) that dissociates from microtubules after allowing tubulin incorporation. Through interaction with spectrin may regulate neurite outgrowth. In Rattus norvegicus (Rat), this protein is Calmodulin-regulated spectrin-associated protein 1 (Camsap1).